Reading from the N-terminus, the 340-residue chain is Holliday junction branch migration complex subunit RuvB (340 aa).

Residues 1–184 (MNENLDPTTK…FGISSRLQYY (184 aa)) form a large ATPase domain (RuvB-L) region. Residues Leu-23, Arg-24, Gly-65, Lys-68, Thr-69, Thr-70, 131-133 (EDF), Arg-174, Tyr-184, and Arg-221 contribute to the ATP site. Mg(2+) is bound at residue Thr-69. The tract at residues 185–255 (STELLTTIVE…ISKYALKALN (71 aa)) is small ATPAse domain (RuvB-S). Residues 258 to 340 (AHGLDEMDNK…INTNIQGGLF (83 aa)) form a head domain (RuvB-H) region. 2 residues coordinate DNA: Arg-313 and Arg-318.

This sequence belongs to the RuvB family. Homohexamer. Forms an RuvA(8)-RuvB(12)-Holliday junction (HJ) complex. HJ DNA is sandwiched between 2 RuvA tetramers; dsDNA enters through RuvA and exits via RuvB. An RuvB hexamer assembles on each DNA strand where it exits the tetramer. Each RuvB hexamer is contacted by two RuvA subunits (via domain III) on 2 adjacent RuvB subunits; this complex drives branch migration. In the full resolvosome a probable DNA-RuvA(4)-RuvB(12)-RuvC(2) complex forms which resolves the HJ.

The protein resides in the cytoplasm. It catalyses the reaction ATP + H2O = ADP + phosphate + H(+). The RuvA-RuvB-RuvC complex processes Holliday junction (HJ) DNA during genetic recombination and DNA repair, while the RuvA-RuvB complex plays an important role in the rescue of blocked DNA replication forks via replication fork reversal (RFR). RuvA specifically binds to HJ cruciform DNA, conferring on it an open structure. The RuvB hexamer acts as an ATP-dependent pump, pulling dsDNA into and through the RuvAB complex. RuvB forms 2 homohexamers on either side of HJ DNA bound by 1 or 2 RuvA tetramers; 4 subunits per hexamer contact DNA at a time. Coordinated motions by a converter formed by DNA-disengaged RuvB subunits stimulates ATP hydrolysis and nucleotide exchange. Immobilization of the converter enables RuvB to convert the ATP-contained energy into a lever motion, pulling 2 nucleotides of DNA out of the RuvA tetramer per ATP hydrolyzed, thus driving DNA branch migration. The RuvB motors rotate together with the DNA substrate, which together with the progressing nucleotide cycle form the mechanistic basis for DNA recombination by continuous HJ branch migration. Branch migration allows RuvC to scan DNA until it finds its consensus sequence, where it cleaves and resolves cruciform DNA. This Flavobacterium johnsoniae (strain ATCC 17061 / DSM 2064 / JCM 8514 / BCRC 14874 / CCUG 350202 / NBRC 14942 / NCIMB 11054 / UW101) (Cytophaga johnsonae) protein is Holliday junction branch migration complex subunit RuvB.